Reading from the N-terminus, the 76-residue chain is Theta defensin subunit C (76 aa).

A signal peptide spans 1–22 (MRTFAFLTAMLLLVALHAQAEA). A propeptide spanning residues 23-64 (RQARADEAAIQEQPGADDQGMAHSFTRNESAVLPLSESERGL) is cleaved from the precursor. A Cyclopeptide (Arg-Cys) (interchain with C-73 in subunit A); in form BTD-4 cross-link involves residue arginine 65. An intrachain disulfide couples cysteine 68 to cysteine 73. Cysteine 73 participates in a covalent cross-link: Cyclopeptide (Cys-Arg) (interchain with R-65 in subunit A); in form BTD-4. Positions 74–76 (RLL) are excised as a propeptide.

The protein belongs to the alpha-defensin family. Theta subfamily. In terms of assembly, BTD-4 is a cyclic heterodimer composed of subunits A and C; disulfide-linked. In terms of processing, forms a cyclic peptide with subunit A (BTD-4). An additional intersubunit disulfide bond is formed.

BTD-4 has antimicrobial activity against the Gram-negative bacterium E.coli ML35, the Gram-positive bacterium S.aureus 502a, and the fungus C.albicans 16820. The chain is Theta defensin subunit C (BTDC) from Papio anubis (Olive baboon).